Consider the following 311-residue polypeptide: tRNA-cytidine(32) 2-sulfurtransferase (311 aa).

The PP-loop motif signature appears at 47-52 (SGGKDS). Positions 122, 125, and 213 each coordinate [4Fe-4S] cluster.

It belongs to the TtcA family. In terms of assembly, homodimer. Mg(2+) is required as a cofactor. The cofactor is [4Fe-4S] cluster.

The protein resides in the cytoplasm. The catalysed reaction is cytidine(32) in tRNA + S-sulfanyl-L-cysteinyl-[cysteine desulfurase] + AH2 + ATP = 2-thiocytidine(32) in tRNA + L-cysteinyl-[cysteine desulfurase] + A + AMP + diphosphate + H(+). It participates in tRNA modification. Functionally, catalyzes the ATP-dependent 2-thiolation of cytidine in position 32 of tRNA, to form 2-thiocytidine (s(2)C32). The sulfur atoms are provided by the cysteine/cysteine desulfurase (IscS) system. The polypeptide is tRNA-cytidine(32) 2-sulfurtransferase (Salmonella arizonae (strain ATCC BAA-731 / CDC346-86 / RSK2980)).